We begin with the raw amino-acid sequence, 160 residues long: Cytochrome b6-f complex subunit 4 (160 aa).

The next 3 membrane-spanning stretches (helical) occupy residues 36 to 56, 95 to 115, and 131 to 151; these read LLYV…ALAV, LLGI…PFIE, and AVFL…TFPI.

This sequence belongs to the cytochrome b family. PetD subfamily. As to quaternary structure, the 4 large subunits of the cytochrome b6-f complex are cytochrome b6, subunit IV (17 kDa polypeptide, PetD), cytochrome f and the Rieske protein, while the 4 small subunits are PetG, PetL, PetM and PetN. The complex functions as a dimer.

It is found in the cellular thylakoid membrane. Functionally, component of the cytochrome b6-f complex, which mediates electron transfer between photosystem II (PSII) and photosystem I (PSI), cyclic electron flow around PSI, and state transitions. The protein is Cytochrome b6-f complex subunit 4 of Rippkaea orientalis (strain PCC 8801 / RF-1) (Cyanothece sp. (strain PCC 8801)).